The primary structure comprises 421 residues: Glutamyl-tRNA reductase (421 aa).

Substrate is bound by residues 49–52, Ser-109, 114–116, and Gln-120; these read TCNR and EPQ. The Nucleophile role is filled by Cys-50. 189–194 provides a ligand contact to NADP(+); sequence GAGKMS.

Belongs to the glutamyl-tRNA reductase family. In terms of assembly, homodimer.

It carries out the reaction (S)-4-amino-5-oxopentanoate + tRNA(Glu) + NADP(+) = L-glutamyl-tRNA(Glu) + NADPH + H(+). Its pathway is porphyrin-containing compound metabolism; protoporphyrin-IX biosynthesis; 5-aminolevulinate from L-glutamyl-tRNA(Glu): step 1/2. Catalyzes the NADPH-dependent reduction of glutamyl-tRNA(Glu) to glutamate 1-semialdehyde (GSA). The polypeptide is Glutamyl-tRNA reductase (Solibacter usitatus (strain Ellin6076)).